The following is a 414-amino-acid chain: Imidazolonepropionase (414 aa).

Fe(3+) is bound by residues histidine 95 and histidine 97. The Zn(2+) site is built by histidine 95 and histidine 97. 4-imidazolone-5-propanoate contacts are provided by arginine 104, tyrosine 162, and histidine 189. Residue tyrosine 162 participates in N-formimidoyl-L-glutamate binding. Fe(3+) is bound at residue histidine 252. Residue histidine 252 participates in Zn(2+) binding. 4-imidazolone-5-propanoate is bound at residue glutamine 255. Residue aspartate 326 coordinates Fe(3+). Position 326 (aspartate 326) interacts with Zn(2+). Residues asparagine 328 and glycine 330 each contribute to the N-formimidoyl-L-glutamate site. Serine 331 serves as a coordination point for 4-imidazolone-5-propanoate.

Belongs to the metallo-dependent hydrolases superfamily. HutI family. Zn(2+) is required as a cofactor. The cofactor is Fe(3+).

The protein resides in the cytoplasm. The catalysed reaction is 4-imidazolone-5-propanoate + H2O = N-formimidoyl-L-glutamate. It participates in amino-acid degradation; L-histidine degradation into L-glutamate; N-formimidoyl-L-glutamate from L-histidine: step 3/3. Functionally, catalyzes the hydrolytic cleavage of the carbon-nitrogen bond in imidazolone-5-propanoate to yield N-formimidoyl-L-glutamate. It is the third step in the universal histidine degradation pathway. This is Imidazolonepropionase from Streptomyces avermitilis (strain ATCC 31267 / DSM 46492 / JCM 5070 / NBRC 14893 / NCIMB 12804 / NRRL 8165 / MA-4680).